A 255-amino-acid chain; its full sequence is MVKVGVFGANGRVGKLLIDDLKLSENISLSSVYVRNSLDFSIDPSVLVSTDMKSFLNACDIVIDFSLPEACEDLLEAAIKTPKPLVIGTTGLNAHQLNLLKQASENMPILYATNMSLGVALLNKLVHQASAALKGFDIEIVEMHHKHKKDAPSGTALTLAHSAASGRGLDLNKVRVSGRDGNIGERNSDEIAVMALRGGDIVGRHTVGFYNDGEFIELNHTATSRNTFSKGAIRAASWLAKKEAGLYSISDCLEI.

NAD(+)-binding positions include 8 to 13 (GANGRV), 88 to 90 (GTT), and 112 to 115 (ATNM). The Proton donor/acceptor role is filled by histidine 144. Histidine 145 serves as a coordination point for (S)-2,3,4,5-tetrahydrodipicolinate. Residue lysine 148 is the Proton donor of the active site. 154–155 (GT) is a binding site for (S)-2,3,4,5-tetrahydrodipicolinate.

This sequence belongs to the DapB family.

It is found in the cytoplasm. It carries out the reaction (S)-2,3,4,5-tetrahydrodipicolinate + NAD(+) + H2O = (2S,4S)-4-hydroxy-2,3,4,5-tetrahydrodipicolinate + NADH + H(+). It catalyses the reaction (S)-2,3,4,5-tetrahydrodipicolinate + NADP(+) + H2O = (2S,4S)-4-hydroxy-2,3,4,5-tetrahydrodipicolinate + NADPH + H(+). It participates in amino-acid biosynthesis; L-lysine biosynthesis via DAP pathway; (S)-tetrahydrodipicolinate from L-aspartate: step 4/4. Its function is as follows. Catalyzes the conversion of 4-hydroxy-tetrahydrodipicolinate (HTPA) to tetrahydrodipicolinate. This is 4-hydroxy-tetrahydrodipicolinate reductase from Sulfurimonas denitrificans (strain ATCC 33889 / DSM 1251) (Thiomicrospira denitrificans (strain ATCC 33889 / DSM 1251)).